The following is a 340-amino-acid chain: HTH-type transcriptional regulator PtxS (340 aa).

In terms of domain architecture, HTH lacI-type spans 12–67 (VTISEVAQAAGVSKATVSRYIGGDRQLLADATAQRIEAVIEQLGYRPNRMASALKR). The segment at residues 14–33 (ISEVAQAAGVSKATVSRYIG) is a DNA-binding region (H-T-H motif).

As to quaternary structure, homodimer.

With respect to regulation, 2-ketogluconate acts as a molecular effector and causes dissociation of PtxS from its target promoter. Glucose negatively affects the molecular binding of PtxS and 2KGA, and gluconic acid inhibits the PtxS-2KGA binding reaction. In terms of biological role, involved in the regulation of 2-ketogluconic acid metabolism via the control of the expression of the kgu operon. Binds directly to a 14-bp palindrome sequence via its conserved HTH motif. The sequence is that of HTH-type transcriptional regulator PtxS from Pseudomonas plecoglossicida.